A 714-amino-acid chain; its full sequence is Neutral ceramidase A (714 aa).

The signal sequence occupies residues 1–23 (MKRSIVFIYSLVILLLSVGFIDA). N-linked (GlcNAc...) asparagine glycosylation is found at asparagine 218 and asparagine 246. Serine 293 (nucleophile) is an active-site residue. Asparagine 353, asparagine 373, asparagine 416, asparagine 571, asparagine 610, and asparagine 700 each carry an N-linked (GlcNAc...) asparagine glycan.

Belongs to the neutral ceramidase family.

It is found in the secreted. The catalysed reaction is an N-acylsphing-4-enine + H2O = sphing-4-enine + a fatty acid. Functionally, hydrolyzes the sphingolipid ceramide into sphingosine and free fatty acid at an optimal pH of 3.0. Has no activity toward glycosphingolipids, such as GalCer and Galbeta1-3GalNAcbeta1-4(NeuAcalpha2-3)Galbeta1-4Glcbeta1-1'Cer or sphingomyelin. This chain is Neutral ceramidase A (dcd2A), found in Dictyostelium discoideum (Social amoeba).